We begin with the raw amino-acid sequence, 152 residues long: UPF0266 membrane protein YobD (152 aa).

3 helical membrane-spanning segments follow: residues 6 to 26, 45 to 65, and 67 to 87; these read LVLILFIAALLAYALYDQFIM, VDSVIFVGLVAILIYNNVTSH, and AQMTTWLLSALALMGFYIFWI.

Belongs to the UPF0266 family.

Its subcellular location is the cell inner membrane. The protein is UPF0266 membrane protein YobD of Salmonella choleraesuis (strain SC-B67).